The chain runs to 107 residues: Nucleoid-associated protein RBE_0048 (107 aa).

Belongs to the YbaB/EbfC family. In terms of assembly, homodimer.

The protein localises to the cytoplasm. Its subcellular location is the nucleoid. Functionally, binds to DNA and alters its conformation. May be involved in regulation of gene expression, nucleoid organization and DNA protection. This is Nucleoid-associated protein RBE_0048 from Rickettsia bellii (strain RML369-C).